We begin with the raw amino-acid sequence, 398 residues long: 1-deoxy-D-xylulose 5-phosphate reductoisomerase (398 aa).

NADPH-binding residues include threonine 11, glycine 12, serine 13, isoleucine 14, arginine 38, asparagine 39, and asparagine 125. Residue lysine 126 coordinates 1-deoxy-D-xylulose 5-phosphate. An NADPH-binding site is contributed by glutamate 127. Residue aspartate 151 participates in Mn(2+) binding. 4 residues coordinate 1-deoxy-D-xylulose 5-phosphate: serine 152, glutamate 153, serine 179, and histidine 202. Glutamate 153 contacts Mn(2+). Position 208 (glycine 208) interacts with NADPH. Positions 215, 220, 221, and 224 each coordinate 1-deoxy-D-xylulose 5-phosphate. Glutamate 224 is a binding site for Mn(2+).

Belongs to the DXR family. Mg(2+) is required as a cofactor. It depends on Mn(2+) as a cofactor.

The catalysed reaction is 2-C-methyl-D-erythritol 4-phosphate + NADP(+) = 1-deoxy-D-xylulose 5-phosphate + NADPH + H(+). It participates in isoprenoid biosynthesis; isopentenyl diphosphate biosynthesis via DXP pathway; isopentenyl diphosphate from 1-deoxy-D-xylulose 5-phosphate: step 1/6. In terms of biological role, catalyzes the NADPH-dependent rearrangement and reduction of 1-deoxy-D-xylulose-5-phosphate (DXP) to 2-C-methyl-D-erythritol 4-phosphate (MEP). This is 1-deoxy-D-xylulose 5-phosphate reductoisomerase from Burkholderia multivorans (strain ATCC 17616 / 249).